Consider the following 622-residue polypeptide: DNA mismatch repair protein MutL (622 aa).

This sequence belongs to the DNA mismatch repair MutL/HexB family.

This protein is involved in the repair of mismatches in DNA. It is required for dam-dependent methyl-directed DNA mismatch repair. May act as a 'molecular matchmaker', a protein that promotes the formation of a stable complex between two or more DNA-binding proteins in an ATP-dependent manner without itself being part of a final effector complex. This is DNA mismatch repair protein MutL from Actinobacillus pleuropneumoniae serotype 3 (strain JL03).